The chain runs to 119 residues: Ribosome-binding factor A (119 aa).

It belongs to the RbfA family. In terms of assembly, monomer. Binds 30S ribosomal subunits, but not 50S ribosomal subunits or 70S ribosomes.

It is found in the cytoplasm. One of several proteins that assist in the late maturation steps of the functional core of the 30S ribosomal subunit. Associates with free 30S ribosomal subunits (but not with 30S subunits that are part of 70S ribosomes or polysomes). Required for efficient processing of 16S rRNA. May interact with the 5'-terminal helix region of 16S rRNA. In Buchnera aphidicola subsp. Acyrthosiphon pisum (strain Tuc7), this protein is Ribosome-binding factor A.